We begin with the raw amino-acid sequence, 92 residues long: Beta-2-microglobulin (92 aa).

The 90-residue stretch at 2 to 91 (PQIQVYTRHP…VSMKEPKTVN (90 aa)) folds into the Ig-like C1-type domain. A disulfide bridge connects residues Cys-22 and Cys-77.

This sequence belongs to the beta-2-microglobulin family. As to quaternary structure, heterodimer of an alpha chain and a beta chain. Beta-2-microglobulin is the beta-chain of major histocompatibility complex class I molecules.

It localises to the secreted. In terms of biological role, component of the class I major histocompatibility complex (MHC). Involved in the presentation of peptide antigens to the immune system. The chain is Beta-2-microglobulin (B2m) from Mus caroli (Ryukyu mouse).